The chain runs to 302 residues: Putative peptide permease protein BOV_A0350 (302 aa).

The segment at 1-22 is disordered; it reads MRSSIHASRLRKMGQSIPASTG. A run of 6 helical transmembrane segments spans residues 38-58, 101-121, 147-167, 200-222, 230-250, and 268-288; these read IFGL…PLWL, LLVA…IGAI, IFLL…VVVI, AGLG…VVYA, ILLE…AASW, and WQWL…NFIG. In terms of domain architecture, ABC transmembrane type-1 spans 97–288; sequence GRISLLVAVS…LAVLAINFIG (192 aa).

Belongs to the binding-protein-dependent transport system permease family. In terms of assembly, the complex is composed of two ATP-binding proteins (BOV_A0347 and BOV_A0348), two transmembrane proteins (BOV_A0350 and BOV_A0351) and a solute-binding protein (BOV_A0352).

The protein localises to the cell inner membrane. Functionally, probably part of an ABC transporter complex that could be involved in peptide import. Probably responsible for the translocation of the substrate across the membrane. In Brucella ovis (strain ATCC 25840 / 63/290 / NCTC 10512), this protein is Putative peptide permease protein BOV_A0350.